The chain runs to 431 residues: Xaa-Arg dipeptidase (431 aa).

It belongs to the peptidase M20A family.

It catalyses the reaction beta-alanyl-L-lysine + H2O = beta-alanine + L-lysine. The catalysed reaction is beta-alanyl-L-arginine + H2O = beta-alanine + L-arginine. The enzyme catalyses beta-alanyl-L-ornithine + H2O = beta-alanine + L-ornithine. It carries out the reaction N(2)-(4-aminobutanoyl)-L-lysine + H2O = 4-aminobutanoate + L-lysine. It catalyses the reaction N(2)-(4-aminobutanoyl)-L-arginine + H2O = 4-aminobutanoate + L-arginine. The catalysed reaction is N(2)-(4-aminobutanoyl)-L-ornithine + H2O = 4-aminobutanoate + L-ornithine. Functionally, catalyzes the peptide bond hydrolysis in dipeptides having basic amino acids lysine, ornithine or arginine at C-terminus. Postulated to function in a metabolite repair mechanism by eliminating alternate dipeptide by-products formed during carnosine synthesis. This is Xaa-Arg dipeptidase from Mus musculus (Mouse).